The sequence spans 444 residues: E1B 55 kDa protein (444 aa).

Residues Met-1–Gln-42 are disordered. 2 positions are modified to phosphoserine: Ser-438 and Ser-439.

Belongs to the adenoviridae E1B 55 kDa protein family. In terms of assembly, interacts with host PML-4 and PML-5; this interaction promotes efficient subnuclear targeting of E1B-55K to PML nuclear bodies. Interacts with E4-ORF3 protein. Interacts with E4-ORF6 protein.

The protein localises to the host nucleus. It localises to the host cytoplasm. Plays a major role to prevent cellular inhibition of viral genome replication. Assembles an SCF-like E3 ubiquitin ligase complex based on the cellular proteins ELOB, ELOC, CUL5 and RBX1, in cooperation with viral E4orf6. This viral RING-type ligase ubiquitinates cellular substrates and targets them to proteasomal degradation: TP53/p53, LIG4, MRE11-RAD50-NBS1 (MRN) complex, ITGA3, DAXX and BLM. E1B-55K probably acts as the substrate-specific adapter of the SCF-like E3 ubiquitin ligase complex. Degradation of host TP53/p53 activity is essential for preventing E1A-induced TP53 accumulation that would otherwise lead to cell apoptosis and growth arrest. E1B-55K also inactivates TP53 transcription-factor activity by binding its transactivation domain. E1B-55K also functions as a SUMO1 E3 ligase for TP53 which causes the latter to be sequestered in promyelocytic leukemia (PML) nuclear bodies thereby contributing to maximal inhibition of TP53 function. The polypeptide is E1B 55 kDa protein (Canis lupus familiaris (Dog)).